The sequence spans 430 residues: Glucose-6-phosphate isomerase (430 aa).

Catalysis depends on Glu284, which acts as the Proton donor. Catalysis depends on residues His305 and Lys420.

Belongs to the GPI family.

It is found in the cytoplasm. It catalyses the reaction alpha-D-glucose 6-phosphate = beta-D-fructose 6-phosphate. It participates in carbohydrate biosynthesis; gluconeogenesis. The protein operates within carbohydrate degradation; glycolysis; D-glyceraldehyde 3-phosphate and glycerone phosphate from D-glucose: step 2/4. Functionally, catalyzes the reversible isomerization of glucose-6-phosphate to fructose-6-phosphate. The sequence is that of Glucose-6-phosphate isomerase from Mycoplasma pneumoniae (strain ATCC 29342 / M129 / Subtype 1) (Mycoplasmoides pneumoniae).